A 176-amino-acid chain; its full sequence is O-acetyl-ADP-ribose deacetylase (176 aa).

The Macro domain occupies 1-175 (MSGRINVVQG…LYQRLLGQYD (175 aa)). Residues 11-12 (DI), Asn25, 33-35 (GVD), and 122-126 (STGIY) contribute to the substrate site. The Proton acceptor role is filled by Asp35.

Belongs to the MacroD-type family. YmdB subfamily. Homodimer. Interacts with RNase III.

It catalyses the reaction 3''-O-acetyl-ADP-D-ribose + H2O = ADP-D-ribose + acetate + H(+). It carries out the reaction 2''-O-acetyl-ADP-D-ribose + H2O = ADP-D-ribose + acetate + H(+). In terms of biological role, deacetylates O-acetyl-ADP ribose to yield ADP-ribose and free acetate. Down-regulates ribonuclease 3 (RNase III) activity. Acts by interacting directly with the region of the ribonuclease that is required for dimerization/activation. The sequence is that of O-acetyl-ADP-ribose deacetylase from Cronobacter turicensis (strain DSM 18703 / CCUG 55852 / LMG 23827 / z3032).